We begin with the raw amino-acid sequence, 162 residues long: Transcription elongation factor GreB (162 aa).

The stretch at 52–76 (GKRRLREIDRRIRFLSKRLEALQII) forms a coiled coil.

It belongs to the GreA/GreB family. GreB subfamily.

Functionally, necessary for efficient RNA polymerase transcription elongation past template-encoded arresting sites. The arresting sites in DNA have the property of trapping a certain fraction of elongating RNA polymerases that pass through, resulting in locked ternary complexes. Cleavage of the nascent transcript by cleavage factors such as GreA or GreB allows the resumption of elongation from the new 3'terminus. GreB releases sequences of up to 9 nucleotides in length. The polypeptide is Transcription elongation factor GreB (Haemophilus ducreyi (strain 35000HP / ATCC 700724)).